We begin with the raw amino-acid sequence, 341 residues long: HTH-type transcriptional repressor PurR (341 aa).

The region spanning 2-56 (ATIKDVAKRANVSTTTVSHVINKTRFVAEETRNAVWTAIKELHYSPSAVARSLKV) is the HTH lacI-type domain. A DNA-binding region (H-T-H motif) is located at residues 4–23 (IKDVAKRANVSTTTVSHVIN). The DNA-binding element occupies 48 to 56 (SAVARSLKV). Hypoxanthine is bound by residues Tyr73, Arg190, Thr192, Phe221, and Asp275.

As to quaternary structure, homodimer.

It participates in purine metabolism; purine nucleotide biosynthesis [regulation]. In terms of biological role, is the main repressor of the genes involved in the de novo synthesis of purine nucleotides, regulating purB, purC, purEK, purF, purHD, purL, purMN and guaBA expression. PurR is allosterically activated to bind its cognate DNA by binding the purine corepressors, hypoxanthine or guanine, thereby effecting transcription repression. This is HTH-type transcriptional repressor PurR from Salmonella paratyphi A (strain ATCC 9150 / SARB42).